The chain runs to 364 residues: Melatonin receptor type 1B (364 aa).

The Extracellular portion of the chain corresponds to Met1–Met42. N-linked (GlcNAc...) asparagine glycosylation occurs at Asn4. A helical membrane pass occupies residues Leu43–Leu63. Residues Ser64 to Asn76 are Cytoplasmic-facing. Residues Leu77–Ile97 traverse the membrane as a helical segment. The Extracellular segment spans residues Leu98 to Ala115. Cys113 and Cys190 are disulfide-bonded. Residues Ser116–Ile136 traverse the membrane as a helical segment. Topologically, residues Asn137–Trp155 are cytoplasmic. Residues Tyr156 to Phe176 form a helical membrane-spanning segment. At Phe177–Tyr200 the chain is on the extracellular side. A helical membrane pass occupies residues Thr201–Leu221. At Arg222–Met253 the chain is on the cytoplasmic side. Residues Phe254–Val274 traverse the membrane as a helical segment. At Ala275–Glu287 the chain is on the extracellular side. A helical transmembrane segment spans residues Gly288 to Tyr308. Topologically, residues Gly309–Leu364 are cytoplasmic. Residues Glu343–Leu364 form a disordered region. A compositionally biased stretch (low complexity) spans Ala352 to Leu364.

The protein belongs to the G-protein coupled receptor 1 family.

It localises to the cell membrane. High affinity receptor for melatonin. The activity of this receptor is mediated by pertussis toxin sensitive G proteins that inhibits adenylate cyclase activity. The sequence is that of Melatonin receptor type 1B (Mtnr1b) from Mus musculus (Mouse).